The following is a 302-amino-acid chain: Homoserine kinase (302 aa).

Residue 92–102 (PLARGLGSSAT) participates in ATP binding.

This sequence belongs to the GHMP kinase family. Homoserine kinase subfamily.

It is found in the cytoplasm. The catalysed reaction is L-homoserine + ATP = O-phospho-L-homoserine + ADP + H(+). The protein operates within amino-acid biosynthesis; L-threonine biosynthesis; L-threonine from L-aspartate: step 4/5. Functionally, catalyzes the ATP-dependent phosphorylation of L-homoserine to L-homoserine phosphate. The polypeptide is Homoserine kinase (Trichormus variabilis (strain ATCC 29413 / PCC 7937) (Anabaena variabilis)).